A 380-amino-acid polypeptide reads, in one-letter code: MIKFSINKNAFQNALRITKQAIGSKVTIPALTKLKIEVEENGITLIGSNGQISIKNFLPVDNKDASMLISGTGSVLLEAAFFENVVSQLPEVTLEFTEKEQKQVLLTSGKSEITLKGLDSEIYPHLQEISEGSSLKMKVKVLKEIFTETVFAVSTQENRPIFTGVHLETLSTGELKAVATDSHRMSQRLLPLEDSELKFDVILPSKSINSFKNVFTNDEEEIEIFISGSQMLFRNETISYYSRLIEGSYPDTNRLIPNEADYTLDLVFDAAQLRHTMDRARLLTVMTTNGTVKLTVSGDSVVTTANSPEVGSVHEELTALSKEGNDLAISFNPEYLIDALKVIKAPEVRIRFISNVRPFTLQPRNEESGFVQLITPVRTN.

The protein belongs to the beta sliding clamp family. Forms a ring-shaped head-to-tail homodimer around DNA which binds and tethers DNA polymerases and other proteins to the DNA. The DNA replisome complex has a single clamp-loading complex (3 tau and 1 each of delta, delta', psi and chi subunits) which binds 3 Pol III cores (1 core on the leading strand and 2 on the lagging strand) each with a beta sliding clamp dimer. Additional proteins in the replisome are other copies of gamma, psi and chi, Ssb, DNA helicase and RNA primase.

The protein localises to the cytoplasm. Its function is as follows. Confers DNA tethering and processivity to DNA polymerases and other proteins. Acts as a clamp, forming a ring around DNA (a reaction catalyzed by the clamp-loading complex) which diffuses in an ATP-independent manner freely and bidirectionally along dsDNA. Initially characterized for its ability to contact the catalytic subunit of DNA polymerase III (Pol III), a complex, multichain enzyme responsible for most of the replicative synthesis in bacteria; Pol III exhibits 3'-5' exonuclease proofreading activity. The beta chain is required for initiation of replication as well as for processivity of DNA replication. The protein is Beta sliding clamp (dnaN) of Lactococcus lactis subsp. lactis (strain IL1403) (Streptococcus lactis).